The sequence spans 135 residues: Ribosome-binding factor A (135 aa).

It belongs to the RbfA family. As to quaternary structure, monomer. Binds 30S ribosomal subunits, but not 50S ribosomal subunits or 70S ribosomes.

It localises to the cytoplasm. In terms of biological role, one of several proteins that assist in the late maturation steps of the functional core of the 30S ribosomal subunit. Associates with free 30S ribosomal subunits (but not with 30S subunits that are part of 70S ribosomes or polysomes). Required for efficient processing of 16S rRNA. May interact with the 5'-terminal helix region of 16S rRNA. The protein is Ribosome-binding factor A of Bartonella henselae (strain ATCC 49882 / DSM 28221 / CCUG 30454 / Houston 1) (Rochalimaea henselae).